The primary structure comprises 844 residues: Fe(2+) transport protein A/Fe(2+) transporter FeoB fusion protein (844 aa).

The interval 1-73 (MRLSELHTGD…EDAAKIEVEL (73 aa)) is feoA. The segment at 74 to 844 (ISSNATSSPA…LIYRIGILFF (771 aa)) is feoB. The span at 79–106 (TSSPASNDIGEQSANPDSNESIPTNPTE) shows a compositional bias: polar residues. Positions 79–110 (TSSPASNDIGEQSANPDSNESIPTNPTEDISA) are disordered. The FeoB-type G domain occupies 126 to 289 (VIRVALIGNP…FDTLISIHEG (164 aa)). Residues 133 to 140 (GNPNCGKT), 158 to 162 (GVTVE), 179 to 182 (DLPG), 240 to 243 (NMFD), and 269 to 271 (VGR) each bind GTP. Transmembrane regions (helical) follow at residues 418–438 (VLGF…TFVL), 475–495 (IGGV…YFFI), 520–540 (LHGK…PAIM), 559–579 (PLMS…AFFP), 581–601 (SAGL…VLLA), 646–666 (MGSI…YPRY), 786–806 (IIAL…ATVV), and 817–837 (WAVF…FLIY).

It in the N-terminal section; belongs to the FeoA family. The protein in the C-terminal section; belongs to the TRAFAC class TrmE-Era-EngA-EngB-Septin-like GTPase superfamily. FeoB GTPase (TC 9.A.8) family.

The protein localises to the cell inner membrane. Probable transporter of a GTP-driven Fe(2+) uptake system. This chain is Fe(2+) transport protein A/Fe(2+) transporter FeoB fusion protein, found in Porphyromonas gingivalis (strain ATCC BAA-308 / W83).